Reading from the N-terminus, the 199-residue chain is HTH-type transcriptional regulator BetI (199 aa).

The HTH tetR-type domain maps to 8-68 (EIRKPQLVKA…ETMREILRQL (61 aa)). The segment at residues 31–50 (SISLISKEAGVSTGIINHYF) is a DNA-binding region (H-T-H motif).

It functions in the pathway amine and polyamine biosynthesis; betaine biosynthesis via choline pathway [regulation]. Repressor involved in the biosynthesis of the osmoprotectant glycine betaine. It represses transcription of the choline transporter BetT and the genes of BetAB involved in the synthesis of glycine betaine. This is HTH-type transcriptional regulator BetI from Vibrio campbellii (strain ATCC BAA-1116).